The sequence spans 758 residues: Probable ubiquitin carboxyl-terminal hydrolase creB (758 aa).

Residues 1-27 (MGSFLRSFRRDVGSSTPSVGATPAKKE) form a disordered region. One can recognise a USP domain in the interval 57–468 (FGMENYGNTC…CAYVLFYQET (412 aa)). The active-site Nucleophile is the Cys66. 2 disordered regions span residues 116 to 148 (AEAQAEKQRLANAQRPGAPPAQPPKPEDKDSSE) and 243 to 268 (QPIPSLPPADTTDSSRQSISSGSKTP). Over residues 253 to 268 (TTDSSRQSISSGSKTP) the composition is skewed to polar residues. His419 serves as the catalytic Proton acceptor. A disordered region spans residues 514 to 744 (IPVQDEPQRH…KGDRAGHGKW (231 aa)). Over residues 554-563 (ATPPPVPPIP) the composition is skewed to pro residues. A coiled-coil region spans residues 573–631 (KKSDIQSKKERAKEEKERKAAEKEMEKQRRKEQEARVKENQRREEAELKAALEASKASK). 2 stretches are compositionally biased toward basic and acidic residues: residues 573-650 (KKSD…DPKR) and 729-740 (DALKSPKGDRAG).

Belongs to the peptidase C19 family. Interacts with creA, creC and qutD.

The enzyme catalyses Thiol-dependent hydrolysis of ester, thioester, amide, peptide and isopeptide bonds formed by the C-terminal Gly of ubiquitin (a 76-residue protein attached to proteins as an intracellular targeting signal).. Its function is as follows. Ubiquitin thioesterase component of the regulatory network controlling carbon source utilization through ubiquitination and deubiquitination involving creA, creB, creC, creD and acrB. Deubiquitinates the creA catabolic repressor and the quinate permease qutD. Also plays a role in response to carbon starvation and the control of extracellular proteases activity. In Aspergillus niger (strain ATCC MYA-4892 / CBS 513.88 / FGSC A1513), this protein is Probable ubiquitin carboxyl-terminal hydrolase creB (creB).